The following is a 77-amino-acid chain: uncharacterized protein (77 aa).

Residues 36 to 52 (FYQLILKVLSALLLLSV) traverse the membrane as a helical segment.

The protein resides in the membrane. This is an uncharacterized protein from Saccharomyces cerevisiae (strain ATCC 204508 / S288c) (Baker's yeast).